A 444-amino-acid polypeptide reads, in one-letter code: Tubulin beta-6 chain (444 aa).

Positions 11, 69, 138, 142, 143, 144, 204, and 226 each coordinate GTP. Glu69 provides a ligand contact to Mg(2+).

The protein belongs to the tubulin family. In terms of assembly, dimer of alpha and beta chains. A typical microtubule is a hollow water-filled tube with an outer diameter of 25 nm and an inner diameter of 15 nM. Alpha-beta heterodimers associate head-to-tail to form protofilaments running lengthwise along the microtubule wall with the beta-tubulin subunit facing the microtubule plus end conferring a structural polarity. Microtubules usually have 13 protofilaments but different protofilament numbers can be found in some organisms and specialized cells. Mg(2+) is required as a cofactor. Expressed in roots, leaf sheaths, anthers, and suspension cultured cells.

It is found in the cytoplasm. It localises to the cytoskeleton. Functionally, tubulin is the major constituent of microtubules, a cylinder consisting of laterally associated linear protofilaments composed of alpha- and beta-tubulin heterodimers. Microtubules grow by the addition of GTP-tubulin dimers to the microtubule end, where a stabilizing cap forms. Below the cap, tubulin dimers are in GDP-bound state, owing to GTPase activity of alpha-tubulin. The sequence is that of Tubulin beta-6 chain (TUBB6) from Oryza sativa subsp. japonica (Rice).